Reading from the N-terminus, the 283-residue chain is Lipoyl synthase (283 aa).

The [4Fe-4S] cluster site is built by Cys-35, Cys-40, Cys-46, Cys-61, Cys-65, Cys-68, and Ser-273. The Radical SAM core domain occupies 47–262 (FRERQATFLI…RAAALATGFA (216 aa)).

This sequence belongs to the radical SAM superfamily. Lipoyl synthase family. Requires [4Fe-4S] cluster as cofactor.

Its subcellular location is the cytoplasm. It carries out the reaction [[Fe-S] cluster scaffold protein carrying a second [4Fe-4S](2+) cluster] + N(6)-octanoyl-L-lysyl-[protein] + 2 oxidized [2Fe-2S]-[ferredoxin] + 2 S-adenosyl-L-methionine + 4 H(+) = [[Fe-S] cluster scaffold protein] + N(6)-[(R)-dihydrolipoyl]-L-lysyl-[protein] + 4 Fe(3+) + 2 hydrogen sulfide + 2 5'-deoxyadenosine + 2 L-methionine + 2 reduced [2Fe-2S]-[ferredoxin]. The protein operates within protein modification; protein lipoylation via endogenous pathway; protein N(6)-(lipoyl)lysine from octanoyl-[acyl-carrier-protein]: step 2/2. Functionally, catalyzes the radical-mediated insertion of two sulfur atoms into the C-6 and C-8 positions of the octanoyl moiety bound to the lipoyl domains of lipoate-dependent enzymes, thereby converting the octanoylated domains into lipoylated derivatives. This chain is Lipoyl synthase, found in Geobacter metallireducens (strain ATCC 53774 / DSM 7210 / GS-15).